The chain runs to 249 residues: Exosome complex component Rrp4 (249 aa).

Positions 73–144 constitute an S1 motif domain; sequence NDIVIGLVED…RSIDPVLSVK (72 aa). One can recognise a KH domain in the interval 154-211; sequence GIVIDIMPVKVPRVIGKNKSMYETLTSKSGCSIFVANNGRIWATCPSRFSEEILIEAI.

This sequence belongs to the RRP4 family. Component of the archaeal exosome complex. Forms a trimer of Rrp4 and/or Csl4 subunits. The trimer associates with a hexameric ring-like arrangement composed of 3 Rrp41-Rrp42 heterodimers.

Its subcellular location is the cytoplasm. Its function is as follows. Non-catalytic component of the exosome, which is a complex involved in RNA degradation. Increases the RNA binding and the efficiency of RNA degradation. Confers strong poly(A) specificity to the exosome. This Saccharolobus solfataricus (strain ATCC 35092 / DSM 1617 / JCM 11322 / P2) (Sulfolobus solfataricus) protein is Exosome complex component Rrp4.